A 417-amino-acid polypeptide reads, in one-letter code: Gamma-glutamyl phosphate reductase (417 aa).

Belongs to the gamma-glutamyl phosphate reductase family.

Its subcellular location is the cytoplasm. The enzyme catalyses L-glutamate 5-semialdehyde + phosphate + NADP(+) = L-glutamyl 5-phosphate + NADPH + H(+). The protein operates within amino-acid biosynthesis; L-proline biosynthesis; L-glutamate 5-semialdehyde from L-glutamate: step 2/2. Functionally, catalyzes the NADPH-dependent reduction of L-glutamate 5-phosphate into L-glutamate 5-semialdehyde and phosphate. The product spontaneously undergoes cyclization to form 1-pyrroline-5-carboxylate. The sequence is that of Gamma-glutamyl phosphate reductase from Escherichia coli O17:K52:H18 (strain UMN026 / ExPEC).